A 177-amino-acid chain; its full sequence is Shikimate kinase (177 aa).

17 to 22 provides a ligand contact to ATP; it reads GVGKTT. Position 21 (threonine 21) interacts with Mg(2+). Substrate-binding residues include aspartate 39, arginine 63, and glycine 86. Arginine 125 is an ATP binding site. A substrate-binding site is contributed by arginine 143. Arginine 159 serves as a coordination point for ATP.

The protein belongs to the shikimate kinase family. In terms of assembly, monomer. Mg(2+) is required as a cofactor.

Its subcellular location is the cytoplasm. It carries out the reaction shikimate + ATP = 3-phosphoshikimate + ADP + H(+). It participates in metabolic intermediate biosynthesis; chorismate biosynthesis; chorismate from D-erythrose 4-phosphate and phosphoenolpyruvate: step 5/7. Its function is as follows. Catalyzes the specific phosphorylation of the 3-hydroxyl group of shikimic acid using ATP as a cosubstrate. This Bacillus licheniformis (strain ATCC 14580 / DSM 13 / JCM 2505 / CCUG 7422 / NBRC 12200 / NCIMB 9375 / NCTC 10341 / NRRL NRS-1264 / Gibson 46) protein is Shikimate kinase.